The sequence spans 344 residues: Beta-1,4-galactosyltransferase 4 (344 aa).

Topologically, residues 1–12 (MGCNPPYLLPYR) are cytoplasmic. Residues 13–38 (LRLLLFFTLCLTVVGWVTSNYFVDPI) traverse the membrane as a helical; Signal-anchor for type II membrane protein segment. The Lumenal segment spans residues 39-344 (QVIPKAKVFM…NITVDFWTGV (306 aa)). C77 and C118 are disulfide-bonded. UDP-alpha-D-galactose is bound by residues 129 to 133 (PHRNR), 168 to 170 (FNR), and 195 to 196 (VD). C189 and C208 are disulfide-bonded. Residue D196 coordinates Mn(2+). N220 carries an N-linked (GlcNAc...) asparagine glycan. 2 residues coordinate UDP-alpha-D-galactose: Y224 and W256. Position 258-261 (258-261 (GEDD)) interacts with N-acetyl-D-glucosamine. H289 contacts Mn(2+). 289 to 291 (HTR) is a binding site for UDP-alpha-D-galactose. R301 provides a ligand contact to N-acetyl-D-glucosamine. The N-linked (GlcNAc...) asparagine glycan is linked to N335.

This sequence belongs to the glycosyltransferase 7 family. The cofactor is Mn(2+).

The protein resides in the golgi apparatus. Its subcellular location is the golgi stack membrane. It catalyses the reaction N-acetyl-D-glucosamine + UDP-alpha-D-galactose = beta-D-galactosyl-(1-&gt;4)-N-acetyl-D-glucosamine + UDP + H(+). The enzyme catalyses a beta-D-GlcNAc-(1-&gt;3)-beta-D-Gal-(1-&gt;4)-beta-D-Glc-(1&lt;-&gt;1)-Cer(d18:1(4E)) + UDP-alpha-D-galactose = a neolactoside nLc4Cer(d18:1(4E)) + UDP + H(+). It participates in protein modification; protein glycosylation. Galactose (Gal) transferase involved in the biosynthesis of glycoproteins, proteoglycans, and glycosyphingolipids. Catalyzes the transfer of Gal residue via a beta1-&gt;4 linkage from UDP-Gal to the non-reducing terminal N-acetyl glucosamine 6-O-sulfate (6-O-sulfoGlcNAc) in the linearly growing chain of both N- and O-linked keratan sulfate proteoglycans. Cooperates with B3GNT7 N-acetyl glucosamine transferase and CHST6 and CHST1 sulfotransferases to construct and elongate mono- and disulfated disaccharide units [-&gt;3Galbeta1-&gt;4(6-sulfoGlcNAcbeta)1-&gt;] and [-&gt;3(6-sulfoGalbeta)1-&gt;4(6-sulfoGlcNAcbeta)1-&gt;] within keratan sulfate polymer. The sequence is that of Beta-1,4-galactosyltransferase 4 (B4GALT4) from Cricetulus griseus (Chinese hamster).